A 391-amino-acid chain; its full sequence is Ferrochelatase (391 aa).

Fe cation contacts are provided by His196 and Glu281.

The protein belongs to the ferrochelatase family.

Its subcellular location is the cytoplasm. The enzyme catalyses heme b + 2 H(+) = protoporphyrin IX + Fe(2+). It functions in the pathway porphyrin-containing compound metabolism; protoheme biosynthesis; protoheme from protoporphyrin-IX: step 1/1. In terms of biological role, catalyzes the ferrous insertion into protoporphyrin IX. The polypeptide is Ferrochelatase (Prochlorococcus marinus (strain NATL1A)).